A 315-amino-acid chain; its full sequence is ATP synthase gamma chain (315 aa).

It belongs to the ATPase gamma chain family. F-type ATPases have 2 components, CF(1) - the catalytic core - and CF(0) - the membrane proton channel. CF(1) has five subunits: alpha(3), beta(3), gamma(1), delta(1), epsilon(1). CF(0) has three main subunits: a, b and c.

The protein localises to the cellular thylakoid membrane. Functionally, produces ATP from ADP in the presence of a proton gradient across the membrane. The gamma chain is believed to be important in regulating ATPase activity and the flow of protons through the CF(0) complex. This is ATP synthase gamma chain from Nostoc punctiforme (strain ATCC 29133 / PCC 73102).